The sequence spans 952 residues: Probable outer membrane protein pmp16 (952 aa).

The first 27 residues, 1-27 (MSKTPPKFLFYLGNFTACMFGMTPAVY), serve as a signal peptide directing secretion. The 307-residue stretch at 646–952 (GDLATTPLWQ…HLQAGSTLKF (307 aa)) folds into the Autotransporter domain.

Belongs to the PMP outer membrane protein family.

The protein localises to the secreted. The protein resides in the cell wall. It is found in the cell outer membrane. The polypeptide is Probable outer membrane protein pmp16 (pmp16) (Chlamydia pneumoniae (Chlamydophila pneumoniae)).